A 947-amino-acid polypeptide reads, in one-letter code: Altered inheritance of mitochondria protein 3 (947 aa).

Disordered stretches follow at residues 1-334 (MGFW…LLPQ), 354-810 (MSST…QDEV), and 824-904 (RKTN…KSLE). Basic residues predominate over residues 36-54 (ASKKHYNNSKARRERKSGK). Phosphoserine is present on residues Ser-57, Ser-58, and Ser-64. Residues 59–69 (DEEYDSEDEME) show a composition bias toward acidic residues. Basic and acidic residues predominate over residues 70–84 (YERKPTDIRSLKDPK). Low complexity-rich tracts occupy residues 93-105 (PGQKTYTGQQQQQ) and 130-163 (QSQYAQPQYNQYPQQQLQQGVMPQQQQLQQGVVP). Residues 177-255 (GSNSNATSYQ…YVSHGSTNLG (79 aa)) are compositionally biased toward polar residues. 2 stretches are compositionally biased toward low complexity: residues 256 to 289 (QSQFPSGQQQQPTTQFGQQVLPSPAQPQQQQQGQ) and 313 to 334 (QQQQQQQQQQQPLNQNNALLPQ). The span at 354–367 (MSSTTNMQDSNPSY) shows a compositional bias: polar residues. The span at 379–395 (GGQPPVPVRMQPQPPQP) shows a compositional bias: pro residues. Residues 466–475 (IQPNTTSSAA) show a composition bias toward polar residues. Ser-476 bears the Phosphoserine mark. Positions 488-502 (DNERNSGNKENDEST) are enriched in basic and acidic residues. The span at 633–644 (VPQSKPQSQSQF) shows a compositional bias: polar residues. The span at 667–676 (SQSSNSSDSS) shows a compositional bias: low complexity. Thr-729 carries the post-translational modification Phosphothreonine. Basic and acidic residues predominate over residues 749 to 759 (DSSKDANKYEK). Polar residues predominate over residues 763–774 (PVTSSIQAQQST). Thr-861 carries the post-translational modification Phosphothreonine. Positions 862 to 879 (PPRPPPSRSSPKKVPPVV) are enriched in pro residues. Basic residues predominate over residues 888–899 (KKPPVVPKKKPL).

It belongs to the AIM3 family. In terms of assembly, interacts with RVS167.

The protein localises to the membrane raft. This is Altered inheritance of mitochondria protein 3 (AIM3) from Saccharomyces cerevisiae (strain ATCC 204508 / S288c) (Baker's yeast).